A 759-amino-acid chain; its full sequence is TIR domain-containing adapter molecule 1 (759 aa).

The TRIF-NTD stretch occupies residues 1–153 (MACTGPSLSG…CGWDVLGDLG (153 aa)). The TRAF6-binding signature appears at 84-91 (ETPEEPPD). A pLxIS motif motif is present at residues 207-210 (LEIS). A Phosphoserine modification is found at serine 210. A Glycyl lysine isopeptide (Lys-Gly) (interchain with G-Cter in ubiquitin) cross-link involves residue lysine 229. A disordered region spans residues 241 to 296 (EPAPMGCQEPEEMSWPPSVEAADSPVRPSSPGPGLPEVTTDACPASPHDPPEVPEI). 2 short sequence motifs (TRAF6-binding) span residues 248–255 (QEPEEMSW) and 299–309 (HYPVECTDVPA). Positions 340–426 (LSAQPRPPTP…PEPPPPELES (87 aa)) are disordered. The segment covering 351–365 (VPQTSPSFPSASTSP) has biased composition (low complexity). The segment covering 366 to 376 (FPSPSTPPEAH) has biased composition (pro residues). A TIR domain is found at 430–590 (KFYNFVVLHA…QDARALREQS (161 aa)). A sufficient to induce apoptosis region spans residues 549 to 759 (LLDEHSKIFA…APEDNTRETE (211 aa)). Residues 642–723 (GQGSLGTPPS…PPARPQSPGL (82 aa)) are disordered. The span at 659–705 (HQPPPLPPWLGGTPPPIFPQPPQTFPQPPPTFPQPPPTFQQPPPACP) shows a compositional bias: pro residues.

In terms of assembly, homodimer. Found in a multi-helicase-TICAM1 complex at least composed of DHX36, DDX1, DDX21 and TICAM1; this complex exists in resting cells with or without poly(I:C) RNA ligand stimulation. Interacts (via TIR domain) with DDX21 (via C-terminus). Interacts (via TIR domain) with DHX36 (via C-terminus). Interacts with AZI2 and IRF7. Interacts with TICAM2 in TLR4 recruitment. Interaction with PIAS4 inhibits the TICAM1-induced NF-kappa-B, IRF and IFNB1 activation. Interacts with IKBKB and IKBKE. Interaction with SARM1 blocks TICAM1-dependent transcription factor activation. Interacts with TRAF3. Interacts (when phosphorylated) with IRF3; following activation and phosphorylation on the pLxIS motif by TBK1, recruits IRF3. Interacts with TBK1, TRAF6 and RIPK1 and these interactions are enhanced in the presence of WDFY1. Interacts with TRAFD1. Interacts with UBQLN1 (via UBA domain). Interacts with TLR4 in response to LPS in a WDFY1-dependent manner. Interacts with WDFY1 in response to poly(I:C). Interacts (via the TIR domain) with TLR3 in response to poly(I:C) and this interaction is enhanced in the presence of WDFY1. Interacts with TRIM56. Component of a multi-helicase-TICAM1 complex that acts as a cytoplasmic sensor of viral double-stranded RNA (dsRNA) and plays a role in the activation of a cascade of antiviral responses including the induction of pro-inflammatory cytokines. Interacts (via the TIR domain) with TLR5. Interacts with TRIM8. Interacts with TAX1BP1 and TRIM32; these interactions target TICAM1 to TAX1BP1-mediated selective autophagic degradation. Interacts with DDX50. In terms of processing, phosphorylated by TBK1. Following activation, phosphorylated by TBK1 at Ser-210 in the pLxIS motif. The phosphorylated pLxIS motif constitutes an IRF3-binding motif, leading to recruitment of the transcription factor IRF3 to induce type-I interferons and other cytokines. Post-translationally, polyubiquitinated at Lys-229 by TRIM38 with 'Lys-48'-linked chains, leading to proteasomal degradation. Polyubiquitinated with 'Lys-6' and 'Lys-33'-linked chains in a TRIM8-dependent manner.

It is found in the cytoplasmic vesicle. Its subcellular location is the autophagosome. The protein localises to the cytoplasm. The protein resides in the cytosol. It localises to the mitochondrion. Functionally, involved in innate immunity against invading pathogens. Adapter used by TLR3, TLR4 (through TICAM2) and TLR5 to mediate NF-kappa-B and interferon-regulatory factor (IRF) activation, and to induce apoptosis. Ligand binding to these receptors results in TRIF recruitment through its TIR domain. Distinct protein-interaction motifs allow recruitment of the effector proteins TBK1, TRAF6 and RIPK1, which in turn, lead to the activation of transcription factors IRF3 and IRF7, NF-kappa-B and FADD respectively. Phosphorylation by TBK1 on the pLxIS motif leads to recruitment and subsequent activation of the transcription factor IRF3 to induce expression of type I interferon and exert a potent immunity against invading pathogens. Component of a multi-helicase-TICAM1 complex that acts as a cytoplasmic sensor of viral double-stranded RNA (dsRNA) and plays a role in the activation of a cascade of antiviral responses including the induction of pro-inflammatory cytokines. The sequence is that of TIR domain-containing adapter molecule 1 (TICAM1) from Bos taurus (Bovine).